Consider the following 315-residue polypeptide: tRNA pseudouridine synthase B (315 aa).

A substrate-binding site is contributed by His-42. Asp-47 functions as the Nucleophile in the catalytic mechanism. Residues Tyr-75, Tyr-178, and Leu-199 each coordinate substrate.

Belongs to the pseudouridine synthase TruB family. Type 1 subfamily.

It catalyses the reaction uridine(55) in tRNA = pseudouridine(55) in tRNA. Functionally, responsible for synthesis of pseudouridine from uracil-55 in the psi GC loop of transfer RNAs. This Photorhabdus laumondii subsp. laumondii (strain DSM 15139 / CIP 105565 / TT01) (Photorhabdus luminescens subsp. laumondii) protein is tRNA pseudouridine synthase B.